A 265-amino-acid polypeptide reads, in one-letter code: Deoxycytidine kinase 2 (265 aa).

31–39 (GNIAAGKST) lines the ATP pocket. Residues Glu-56, Tyr-89, and Gln-100 each contribute to the substrate site. Glu-130 acts as the Proton acceptor in catalysis. Substrate is bound by residues Arg-131 and Asp-136. Position 191 to 195 (191 to 195 (RLQKR)) interacts with ATP. Glu-200 contributes to the substrate binding site. Residue 243–245 (EDF) coordinates ATP.

It belongs to the DCK/DGK family. In terms of assembly, homodimer. As to expression, expressed at high levels in adult intestine, spleen, thymus and testis with lower levels in skeletal muscle and eye. In the embryo, expressed at higher levels until day 10 with lower levels in later stages.

Its subcellular location is the nucleus. It catalyses the reaction 2'-deoxycytidine + a ribonucleoside 5'-triphosphate = dCMP + a ribonucleoside 5'-diphosphate + H(+). The catalysed reaction is 2'-deoxyguanosine + ATP = dGMP + ADP + H(+). It carries out the reaction 2'-deoxyadenosine + ATP = dAMP + ADP + H(+). In terms of biological role, phosphorylates the deoxyribonucleosides deoxyadenosine, deoxycytidine and deoxyguanosine. Shows highest activity against deoxyguanosine followed by deoxycytidine and then deoxyadenosine. Shows only very minor activity against deoxyuridine and deoxythymidine. In Gallus gallus (Chicken), this protein is Deoxycytidine kinase 2.